Reading from the N-terminus, the 244-residue chain is MSDYVIECHNLETAYVGSLNRPILNEISCHIKQGEFVVLLGLNGAGKSTLLRSLVGLVPLVKGEVHINGVAMNSRILPQIRRDVGMLFQGGGLIPQLSAIENVLCGRLGTRTTWQTLFGFPKRDRLLALELLEQLGLRELAYQRTSKLSGGQQQRVAIARALIQSPQILLADEPTTGLDVIATQQVMETLAELHTQQGMTVVAVLHDLGMAARYAQRAIVLDAGRIVYEGSCDNLQAQFVVNSQ.

The ABC transporter domain maps to 6-244 (IECHNLETAY…LQAQFVVNSQ (239 aa)). 41 to 48 (GLNGAGKS) contributes to the ATP binding site.

Belongs to the ABC transporter superfamily. Phosphonates importer (TC 3.A.1.9.1) family. In terms of assembly, the complex is composed of two ATP-binding proteins (PhnC), two transmembrane proteins (PhnE) and a solute-binding protein (PhnD).

The protein localises to the cell inner membrane. The enzyme catalyses phosphonate(out) + ATP + H2O = phosphonate(in) + ADP + phosphate + H(+). In terms of biological role, part of the ABC transporter complex PhnCDE involved in phosphonates import. Responsible for energy coupling to the transport system. This Trichormus variabilis (strain ATCC 29413 / PCC 7937) (Anabaena variabilis) protein is Phosphonates import ATP-binding protein PhnC.